The sequence spans 144 residues: Maximins 2/H8 type 1 (144 aa).

An N-terminal signal peptide occupies residues 1–18 (MNFKYIVAVSFLIASAYA). Positions 19-43 (RSEENEIQSLSQRDVLEEESLREMR) are excised as a propeptide. Position 70 is an asparagine amide (Asn70). Positions 74-123 (TAEEHEVMKRLETVMRDLDSLDYPEEASERETRGFNQEEIANLFTKKEKR) are excised as a propeptide. Ile143 is modified (isoleucine amide).

This sequence belongs to the bombinin family. As to expression, expressed by the skin glands.

It is found in the secreted. In terms of biological role, maximin-2 shows antibacterial activity against both Gram-positive and Gram-negative bacteria. It also shows antimicrobial activity against the fungus C.albicans, but not against A.flavus nor P.uticale. It has little hemolytic activity. Its function is as follows. Maximin-H8 shows antimicrobial activity against bacteria and against the fungus C.albicans. Shows strong hemolytic activity. This chain is Maximins 2/H8 type 1, found in Bombina maxima (Giant fire-bellied toad).